A 67-amino-acid chain; its full sequence is ATP synthase F(0) complex subunit 8 (67 aa).

The helical transmembrane segment at 8 to 24 (TWFITIISSMITLFILF) threads the bilayer. Lys-54 carries the post-translational modification N6-acetyllysine; alternate. Lys-54 bears the N6-succinyllysine; alternate mark. At Lys-57 the chain carries N6-acetyllysine.

This sequence belongs to the ATPase protein 8 family. As to quaternary structure, component of the ATP synthase complex composed at least of ATP5F1A/subunit alpha, ATP5F1B/subunit beta, ATP5MC1/subunit c (homooctomer), MT-ATP6/subunit a, MT-ATP8/subunit 8, ATP5ME/subunit e, ATP5MF/subunit f, ATP5MG/subunit g, ATP5MK/subunit k, ATP5MJ/subunit j, ATP5F1C/subunit gamma, ATP5F1D/subunit delta, ATP5F1E/subunit epsilon, ATP5PF/subunit F6, ATP5PB/subunit b, ATP5PD/subunit d, ATP5PO/subunit OSCP. ATP synthase complex consists of a soluble F(1) head domain (subunits alpha(3) and beta(3)) - the catalytic core - and a membrane F(0) domain - the membrane proton channel (subunits c, a, 8, e, f, g, k and j). These two domains are linked by a central stalk (subunits gamma, delta, and epsilon) rotating inside the F1 region and a stationary peripheral stalk (subunits F6, b, d, and OSCP). Interacts with PRICKLE3.

The protein localises to the mitochondrion membrane. Its function is as follows. Subunit 8, of the mitochondrial membrane ATP synthase complex (F(1)F(0) ATP synthase or Complex V) that produces ATP from ADP in the presence of a proton gradient across the membrane which is generated by electron transport complexes of the respiratory chain. ATP synthase complex consist of a soluble F(1) head domain - the catalytic core - and a membrane F(1) domain - the membrane proton channel. These two domains are linked by a central stalk rotating inside the F(1) region and a stationary peripheral stalk. During catalysis, ATP synthesis in the catalytic domain of F(1) is coupled via a rotary mechanism of the central stalk subunits to proton translocation. In vivo, can only synthesize ATP although its ATP hydrolase activity can be activated artificially in vitro. Part of the complex F(0) domain. This Mus musculus (Mouse) protein is ATP synthase F(0) complex subunit 8.